Consider the following 204-residue polypeptide: Transcriptional regulator GfcR (204 aa).

This sequence belongs to the purine/pyrimidine phosphoribosyltransferase family. GfcR subfamily.

In Methanoculleus marisnigri (strain ATCC 35101 / DSM 1498 / JR1), this protein is Transcriptional regulator GfcR.